A 339-amino-acid polypeptide reads, in one-letter code: Nicotinate-nucleotide--dimethylbenzimidazole phosphoribosyltransferase (339 aa).

Catalysis depends on E306, which acts as the Proton acceptor.

This sequence belongs to the CobT family.

It catalyses the reaction 5,6-dimethylbenzimidazole + nicotinate beta-D-ribonucleotide = alpha-ribazole 5'-phosphate + nicotinate + H(+). It participates in nucleoside biosynthesis; alpha-ribazole biosynthesis; alpha-ribazole from 5,6-dimethylbenzimidazole: step 1/2. In terms of biological role, catalyzes the synthesis of alpha-ribazole-5'-phosphate from nicotinate mononucleotide (NAMN) and 5,6-dimethylbenzimidazole (DMB). This Brucella melitensis biotype 2 (strain ATCC 23457) protein is Nicotinate-nucleotide--dimethylbenzimidazole phosphoribosyltransferase.